The sequence spans 60 residues: MARLKITQTKSYIGSKQNHRDTLRSLGLKRLNDSVVKEDRPEFRGMVHTVRHLVTVEEVD.

Belongs to the universal ribosomal protein uL30 family. As to quaternary structure, part of the 50S ribosomal subunit.

In Streptomyces griseus subsp. griseus (strain JCM 4626 / CBS 651.72 / NBRC 13350 / KCC S-0626 / ISP 5235), this protein is Large ribosomal subunit protein uL30.